Consider the following 324-residue polypeptide: UDP-N-acetylenolpyruvoylglucosamine reductase (324 aa).

One can recognise an FAD-binding PCMH-type domain in the interval F36–D211. The active site involves R183. Catalysis depends on S232, which acts as the Proton donor. The active site involves E302.

This sequence belongs to the MurB family. FAD serves as cofactor.

It is found in the cytoplasm. The catalysed reaction is UDP-N-acetyl-alpha-D-muramate + NADP(+) = UDP-N-acetyl-3-O-(1-carboxyvinyl)-alpha-D-glucosamine + NADPH + H(+). The protein operates within cell wall biogenesis; peptidoglycan biosynthesis. Its function is as follows. Cell wall formation. The polypeptide is UDP-N-acetylenolpyruvoylglucosamine reductase (Sinorhizobium medicae (strain WSM419) (Ensifer medicae)).